Reading from the N-terminus, the 103-residue chain is Small ribosomal subunit protein uS10 (103 aa).

This sequence belongs to the universal ribosomal protein uS10 family. Part of the 30S ribosomal subunit.

Involved in the binding of tRNA to the ribosomes. This Chromohalobacter salexigens (strain ATCC BAA-138 / DSM 3043 / CIP 106854 / NCIMB 13768 / 1H11) protein is Small ribosomal subunit protein uS10.